The following is a 503-amino-acid chain: LEM domain-containing protein 2 (503 aa).

N-acetylalanine is present on Ala-2. The LEM domain occupies 2 to 42 (AGLSDLELRRELQALGFQPGPITDTTRDVYRNKLRRLRGEA). Positions 42–74 (ARLRDEERLREEARPRGEERLREEARLREDAPL) are enriched in basic and acidic residues. 2 disordered regions span residues 42 to 97 (ARLR…SGSA) and 127 to 157 (AQLR…GPGL). The interval 74–130 (LRARPAAASPRAEPWLSQPASGSAYATPGAYGDIRPSAASWVGSRGLAYPARPAQLR) is required for nuclear retention and interaction with LMNA isoform C. The span at 75-87 (RARPAAASPRAEP) shows a compositional bias: low complexity. Phosphoserine occurs at positions 166 and 175. The tract at residues 172-198 (LPSSLLGPDPRPGLRATRAGPAGAARA) is disordered. Positions 184 to 197 (GLRATRAGPAGAAR) are enriched in low complexity. 2 helical membrane passes run 213 to 233 (LLLW…WVKM) and 377 to 397 (VTNV…LILL). The tract at residues 395–503 (ILLKYRWRKL…KPSSFSDSER (109 aa)) is winged-Helix (WH). Ser-497, Ser-499, and Ser-501 each carry phosphoserine.

Interacts (via N-terminus) with LMNA isoform C (via C-terminus) (in vitro). Interacts (via LEM domain) with BANF1. Interacts (via C-terminus) with CHMP7. Interacts (via N-terminus) with tubulin; the interaction causes microtubule bundling and stabilization (in vitro). Post-translationally, phosphorylated; strongly phosphorylated in mitosis compared to G1/S. In terms of tissue distribution, ubiquitously expressed, including bone marrow, brain, kidney, colon, skeletal muscle, thymus, testis and uterus.

Its subcellular location is the nucleus inner membrane. It is found in the nucleus envelope. The protein resides in the cytoplasm. It localises to the cytoskeleton. The protein localises to the spindle. Functionally, nuclear lamina-associated inner nuclear membrane protein that is involved in nuclear structure organization, maintenance of nuclear envelope (NE) integrity and NE reformation after mitosis. Plays a role as transmembrane adapter for the endosomal sorting complexes required for transport (ESCRT), and is thereby involved in ESCRT-mediated NE reformation. Promotes ESCRT-mediated NE closure by recruiting CHMP7 and downstream ESCRT-III proteins IST1/CHMP8 and CHMP2A to the reforming NE during anaphase. During nuclear reassembly, condenses into a liquid-like coating around microtubule spindles and coassembles with CHMP7 to form a macromolecular O-ring seal at the confluence between membranes, chromatin, and the spindle to facilitate early nuclear sealing. Plays a role in the organization of heterochromatin associated with the NE and in the maintenance of NE organization under mechanical stress. Required for embryonic development and involved in regulation of several signaling pathways such as MAPK and AKT. Required for myoblast differentiation involving regulation of ERK signaling. Essential for cardiac homeostasis and proper heart function. The protein is LEM domain-containing protein 2 (LEMD2) of Homo sapiens (Human).